The following is a 184-amino-acid chain: U3 small nucleolar ribonucleoprotein protein IMP3 (184 aa).

The S4 RNA-binding domain occupies arginine 109–glutamate 175.

Belongs to the universal ribosomal protein uS4 family. Part of the small subunit (SSU) processome, composed of more than 70 proteins and the RNA chaperone small nucleolar RNA (snoRNA) U3. Component of a heterotrimeric complex containing IMP3, IMP4 and MPHOSPH10. Interacts with MPHOSPH10.

The protein localises to the nucleus. It localises to the nucleolus. Component of the 60-80S U3 small nucleolar ribonucleoprotein (U3 snoRNP). Required for the early cleavages during pre-18S ribosomal RNA processing. Part of the small subunit (SSU) processome, first precursor of the small eukaryotic ribosomal subunit. During the assembly of the SSU processome in the nucleolus, many ribosome biogenesis factors, an RNA chaperone and ribosomal proteins associate with the nascent pre-rRNA and work in concert to generate RNA folding, modifications, rearrangements and cleavage as well as targeted degradation of pre-ribosomal RNA by the RNA exosome. The chain is U3 small nucleolar ribonucleoprotein protein IMP3 from Homo sapiens (Human).